A 470-amino-acid polypeptide reads, in one-letter code: Isocitrate dehydrogenase (NAD(+)), mitochondrial (470 aa).

The N-terminal 26 residues, 1–26, are a transit peptide targeting the mitochondrion; sequence MTRVERGRVLARAIERAVAHRASARR. NAD(+) contacts are provided by residues 138-140 and Asn159; that span reads TVT. D-threo-isocitrate contacts are provided by residues 157–163, Arg193, Tyr200, Lys275, and Asp319; that span reads SPNGAMR. Residue Asp319 coordinates Mg(2+). Lys324 provides a ligand contact to NAD(+). Asp343 provides a ligand contact to D-threo-isocitrate. Mg(2+)-binding residues include Asp343 and Asp347. Residues 380-385 and Asn399 each bind NAD(+); that span reads HGTVAD.

The protein belongs to the isocitrate and isopropylmalate dehydrogenases family. As to quaternary structure, forms homodimers. It depends on Mg(2+) as a cofactor. The cofactor is Mn(2+).

The protein localises to the mitochondrion. The catalysed reaction is D-threo-isocitrate + NAD(+) = 2-oxoglutarate + CO2 + NADH. The homodimer exhibits allosteric regulation by isocitrate. Performs an essential role in the oxidative function of the tricarboxylic acid cycle and respiration. Catalyzes the decarboxylation of isocitrate to produce 2-oxoglutarate and generate NADH to provide electrons for energy production. The polypeptide is Isocitrate dehydrogenase (NAD(+)), mitochondrial (Ostreococcus tauri).